A 630-amino-acid chain; its full sequence is Probable potassium transport system protein Kup (630 aa).

The next 12 membrane-spanning stretches (helical) occupy residues 17-37, 51-71, 105-125, 144-164, 175-195, 218-238, 255-275, 283-303, 344-364, 374-394, 402-422, and 428-448; these read LAIAAIGVVFGDIGTSPLYSL, PSAILGVISLLFWAIILVVGI, ITGLMMALGIFGACMFYGDAV, PQLSHLVLPITIVILIALFWI, LFGPIMVIWFVTIAALGVYHI, VLLAYVVLGSVVLVLTGAEAL, YVLVMPSLVLNYFGQGALLLL, PFFLLAPQWAALPLVVLSTVA, IYVPVVNWLLLFVILCIVIGF, YGIAVTATMVITTILAAVVMV, LLVAMIIGVFLVIDLGFFGAN, and QGGWLPLGIGALLFFLLMTWY.

This sequence belongs to the HAK/KUP transporter (TC 2.A.72) family.

The protein resides in the cell inner membrane. It carries out the reaction K(+)(in) + H(+)(in) = K(+)(out) + H(+)(out). Its function is as follows. Transport of potassium into the cell. Likely operates as a K(+):H(+) symporter. In Burkholderia thailandensis (strain ATCC 700388 / DSM 13276 / CCUG 48851 / CIP 106301 / E264), this protein is Probable potassium transport system protein Kup.